A 533-amino-acid polypeptide reads, in one-letter code: Lanosterol 14-alpha demethylase (533 aa).

C472 serves as a coordination point for heme.

The protein belongs to the cytochrome P450 family. Heme serves as cofactor.

The protein localises to the membrane. It carries out the reaction a 14alpha-methyl steroid + 3 reduced [NADPH--hemoprotein reductase] + 3 O2 = a Delta(14) steroid + formate + 3 oxidized [NADPH--hemoprotein reductase] + 4 H2O + 4 H(+). The catalysed reaction is a 14alpha-methyl steroid + reduced [NADPH--hemoprotein reductase] + O2 = a 14alpha-hydroxymethyl steroid + oxidized [NADPH--hemoprotein reductase] + H2O + H(+). It catalyses the reaction a 14alpha-hydroxymethyl steroid + reduced [NADPH--hemoprotein reductase] + O2 = a 14alpha-formyl steroid + oxidized [NADPH--hemoprotein reductase] + 2 H2O + H(+). The enzyme catalyses a 14alpha-formyl steroid + reduced [NADPH--hemoprotein reductase] + O2 = a Delta(14) steroid + formate + oxidized [NADPH--hemoprotein reductase] + H2O + 2 H(+). It carries out the reaction lanosterol + 3 reduced [NADPH--hemoprotein reductase] + 3 O2 = 4,4-dimethyl-5alpha-cholesta-8,14,24-trien-3beta-ol + formate + 3 oxidized [NADPH--hemoprotein reductase] + 4 H2O + 4 H(+). The catalysed reaction is lanosterol + reduced [NADPH--hemoprotein reductase] + O2 = 32-hydroxylanosterol + oxidized [NADPH--hemoprotein reductase] + H2O + H(+). It catalyses the reaction 32-hydroxylanosterol + reduced [NADPH--hemoprotein reductase] + O2 = 32-oxolanosterol + oxidized [NADPH--hemoprotein reductase] + 2 H2O + H(+). The enzyme catalyses 32-oxolanosterol + reduced [NADPH--hemoprotein reductase] + O2 = 4,4-dimethyl-5alpha-cholesta-8,14,24-trien-3beta-ol + formate + oxidized [NADPH--hemoprotein reductase] + H2O + 2 H(+). It carries out the reaction eburicol + 3 reduced [NADPH--hemoprotein reductase] + 3 O2 = 14-demethyleburicol + formate + 3 oxidized [NADPH--hemoprotein reductase] + 4 H2O + 4 H(+). The catalysed reaction is eburicol + reduced [NADPH--hemoprotein reductase] + O2 = 32-hydroxyeburicol + oxidized [NADPH--hemoprotein reductase] + H2O + H(+). It catalyses the reaction 32-hydroxyeburicol + reduced [NADPH--hemoprotein reductase] + O2 = 32-oxoeburicol + oxidized [NADPH--hemoprotein reductase] + 2 H2O + H(+). The enzyme catalyses 32-oxoeburicol + reduced [NADPH--hemoprotein reductase] + O2 = 14-demethyleburicol + formate + oxidized [NADPH--hemoprotein reductase] + H2O + 2 H(+). Its pathway is steroid biosynthesis; zymosterol biosynthesis; zymosterol from lanosterol: step 1/6. Sterol 14alpha-demethylase that plays a critical role in the third module of ergosterol biosynthesis pathway, being ergosterol the major sterol component in fungal membranes that participates in a variety of functions. The third module or late pathway involves the ergosterol synthesis itself through consecutive reactions that mainly occur in the endoplasmic reticulum (ER) membrane. In filamentous fungi, during the initial step of this module, lanosterol (lanosta-8,24-dien-3beta-ol) can be metabolized to eburicol. Sterol 14alpha-demethylase catalyzes the three-step oxidative removal of the 14alpha-methyl group (C-32) of both these sterols in the form of formate, and converts eburicol and lanosterol to 14-demethyleburicol (4,4,24-trimethylergosta-8,14,24(28)-trienol) and 4,4-dimethyl-5alpha-cholesta-8,14,24-trien-3beta-ol, respectively, which are further metabolized by other enzymes in the pathway to ergosterol. Can also use substrates not intrinsic to fungi, such as 24,25-dihydrolanosterol (DHL), producing 4,4-dimethyl-8,14-cholestadien-3-beta-ol, but at lower rates than the endogenous substrates. The sequence is that of Lanosterol 14-alpha demethylase (ERG11) from Candida glabrata (strain ATCC 2001 / BCRC 20586 / JCM 3761 / NBRC 0622 / NRRL Y-65 / CBS 138) (Yeast).